Reading from the N-terminus, the 218-residue chain is Tubulin polymerization-promoting protein (218 aa).

Positions methionine 1 to glutamate 46 are disordered. The segment at methionine 1 to phenylalanine 115 is mediates interaction with LIMK1. At threonine 15 the chain carries Phosphothreonine. Phosphoserine is present on residues serine 19, serine 31, and serine 34. Threonine 42 bears the Phosphothreonine mark. Zn(2+) contacts are provided by histidine 60, histidine 71, cysteine 79, and cysteine 82. Phosphothreonine is present on threonine 91. Residue serine 106 is modified to Phosphoserine. A glycan (O-linked (GlcNAc) serine) is linked at serine 151. Phosphoserine is present on residues serine 158 and serine 159. A disordered region spans residues threonine 166–valine 192. Residues serine 174–glycine 183 show a composition bias toward basic and acidic residues.

It belongs to the TPPP family. As to quaternary structure, homodimer. Binds tubulin; binding is inhibited by GTP. Interacts with MAPK1. Interacts with GAPDH; the interaction is direct. Interacts with LIMK1 (via the PDZ domain); the interaction is direct. Interacts with LIMK2. Interacts with HDAC6; thereby inhibiting the tubulin deacetylase activity of HDAC6. Interacts with aggregated SNCA; may have a pro-aggregatory role in synucleinopathies. Interacts with DYNLL1. Interacts (via C-terminus) with S100A2, S100A6 and S100B; these interactions inhibit TPPP dimerization. The cofactor is Mg(2+). In terms of processing, phosphorylated by LIMK1 on serine residues; phosphorylation may alter the tubulin polymerization activity. Phosphorylation by LIMK2, but not LIMK1, regulates astral microtubule organization at early stage of mitosis. Phosphorylation by ROCK1 at Ser-31, Ser-106 and Ser-158 inhibits interaction with HDAC6, resulting in decreased acetylation of tubulin, increased cell motility and entry into S-phase. Phosphorylation by CDK1 inhibits the microtubule polymerizing activity. Post-translationally, degraded by the proteasome; zinc-binding inhibits degradation by the proteasome. Widely expressed with higher expression in brain (at protein level).

The protein resides in the golgi outpost. Its subcellular location is the cytoplasm. It is found in the cytoskeleton. The protein localises to the microtubule organizing center. It localises to the nucleus. The protein resides in the spindle. It catalyses the reaction GTP + H2O = GDP + phosphate + H(+). Functionally, regulator of microtubule dynamics that plays a key role in myelination by promoting elongation of the myelin sheath. Acts as a microtubule nucleation factor in oligodendrocytes: specifically localizes to the postsynaptic Golgi apparatus region, also named Golgi outpost, and promotes microtubule nucleation, an important step for elongation of the myelin sheath. Required for both uniform polarized growth of distal microtubules as well as directing the branching of proximal processes. Shows magnesium-dependent GTPase activity; the role of the GTPase activity is unclear. In addition to microtubule nucleation activity, also involved in microtubule bundling and stabilization of existing microtubules, thereby maintaining the integrity of the microtubule network. Regulates microtubule dynamics by promoting tubulin acetylation: acts by inhibiting the tubulin deacetylase activity of HDAC6. Also regulates cell migration: phosphorylation by ROCK1 inhibits interaction with HDAC6, resulting in decreased acetylation of tubulin and increased cell motility. Plays a role in cell proliferation by regulating the G1/S-phase transition. Involved in astral microtubule organization and mitotic spindle orientation during early stage of mitosis; this process is regulated by phosphorylation by LIMK2. This is Tubulin polymerization-promoting protein from Mus musculus (Mouse).